Here is a 1703-residue protein sequence, read N- to C-terminus: Pecanex-like protein 1 (1703 aa).

2 helical membrane-spanning segments follow: residues 31-53 and 57-74; these read VNAL…YMAL and MVIV…FLLL. The span at 91–100 shows a compositional bias: basic and acidic residues; that stretch reads VEHQTRESKG. The tract at residues 91–126 is disordered; that stretch reads VEHQTRESKGSRGGTGGANDPVTRREDSNGLGDPGG. Residue N256 is glycosylated (N-linked (GlcNAc...) asparagine). Transmembrane regions (helical) follow at residues 416-438, 477-499, and 525-547; these read VLAV…HGFF, AYSR…YGSL, and LVIV…QVNT. An N-linked (GlcNAc...) asparagine glycan is attached at N564. The next 4 helical transmembrane spans lie at 569–591, 603–622, 675–697, and 704–721; these read LLSA…CFCY, IPVL…YHLS, LIVC…FIAL, and VLYG…YLLP. N-linked (GlcNAc...) asparagine glycans are attached at residues N988, N1129, and N1391. 2 disordered regions span residues 1475–1556 and 1577–1598; these read VQSG…HSIP and TDPL…PTHA. 2 stretches are compositionally biased toward low complexity: residues 1485 to 1510 and 1518 to 1556; these read ARAS…RTST and RSST…HSIP. A compositionally biased stretch (basic residues) spans 1582–1591; the sequence is QHHHPHHHPQ. A glycan (N-linked (GlcNAc...) asparagine) is linked at N1622.

This sequence belongs to the pecanex family.

The protein resides in the membrane. The chain is Pecanex-like protein 1 from Takifugu rubripes (Japanese pufferfish).